The chain runs to 287 residues: 4,4'-diapophytoene synthase (287 aa).

(2E,6E)-farnesyl diphosphate is bound by residues 18–21 (HSKS), Tyr-41, and Arg-45. Mg(2+) is bound by residues Asp-48 and Asp-52. Gln-165 contributes to the (2E,6E)-farnesyl diphosphate binding site. A Mg(2+)-binding site is contributed by Asn-168. Arg-171 provides a ligand contact to (2E,6E)-farnesyl diphosphate. Asp-172 provides a ligand contact to Mg(2+). Tyr-248 provides a ligand contact to (2E,6E)-farnesyl diphosphate.

It belongs to the phytoene/squalene synthase family. CrtM subfamily. Mg(2+) serves as cofactor.

It carries out the reaction 2 (2E,6E)-farnesyl diphosphate = 15-cis-4,4'-diapophytoene + 2 diphosphate. The protein operates within carotenoid biosynthesis; staphyloxanthin biosynthesis; staphyloxanthin from farnesyl diphosphate: step 1/5. Involved in the biosynthesis of the yellow-orange carotenoid staphyloxanthin, which plays a role in the virulence via its protective function against oxidative stress. Catalyzes the head-to-head condensation of two molecules of farnesyl diphosphate (FPP) into the colorless C(30) carotenoid 4,4'-diapophytoene (dehydrosqualene). The polypeptide is 4,4'-diapophytoene synthase (Staphylococcus aureus (strain NCTC 8325 / PS 47)).